Here is a 255-residue protein sequence, read N- to C-terminus: Probable transcriptional regulatory protein PCC7424_2775 (255 aa).

This sequence belongs to the TACO1 family.

The protein resides in the cytoplasm. This Gloeothece citriformis (strain PCC 7424) (Cyanothece sp. (strain PCC 7424)) protein is Probable transcriptional regulatory protein PCC7424_2775.